Reading from the N-terminus, the 622-residue chain is Cilia- and flagella-associated protein 206 (622 aa).

Positions 570–592 (SQVYPPKDTSTQSMREDSTGVPR) are disordered.

It belongs to the CFAP206 family.

The protein resides in the cytoplasm. The protein localises to the cytoskeleton. It is found in the cilium axoneme. Its subcellular location is the cilium basal body. Functionally, essential for sperm motility and is involved in the regulation of the beating frequency of motile cilia on the epithelial cells of the respiratory tract. Required for the establishment of radial spokes in sperm flagella. This Homo sapiens (Human) protein is Cilia- and flagella-associated protein 206.